The following is a 220-amino-acid chain: Lipoprotein-releasing system ATP-binding protein LolD (220 aa).

An ABC transporter domain is found at 1–220 (MRAVDIHKSY…YRMKDGQWQS (220 aa)). 37–44 (GASGAGKS) provides a ligand contact to ATP.

This sequence belongs to the ABC transporter superfamily. Lipoprotein translocase (TC 3.A.1.125) family. In terms of assembly, the complex is composed of two ATP-binding proteins (LolD) and two transmembrane proteins (LolC and LolE).

Its subcellular location is the cell inner membrane. Its function is as follows. Part of the ABC transporter complex LolCDE involved in the translocation of mature outer membrane-directed lipoproteins, from the inner membrane to the periplasmic chaperone, LolA. Responsible for the formation of the LolA-lipoprotein complex in an ATP-dependent manner. This is Lipoprotein-releasing system ATP-binding protein LolD from Bdellovibrio bacteriovorus (strain ATCC 15356 / DSM 50701 / NCIMB 9529 / HD100).